A 372-amino-acid chain; its full sequence is Protein phosphatase 1 regulatory subunit 42 (372 aa).

7 LRR repeats span residues 30–51 (RITHLNFSNKNIDEVEDLTMCR), 52–71 (NLTVLYLYDNNINQIKNLGS), 72–93 (NLTHLYLQNNCISCIENLSGLK), 94–115 (RLEKLYLGGNCLTVVEGLEGLR), 116–137 (ELRELHIENQRLPPGEKLLFDP), 146–167 (SLSVLNISNNNIDELKDLAVLE), and 168–189 (NLTQFVAADNQLKEIKDLEFVL). The 39-residue stretch at 203-241 (NPVCLKPKYREKVTIISKTLEILDGKEIKEMARQFLLNW) folds into the LRRCT domain.

The protein localises to the cytoplasm. Its subcellular location is the cytoskeleton. It is found in the microtubule organizing center. The protein resides in the centrosome. May regulate phosphatase activity of protein phosphatase 1 (PP1) complexes. The chain is Protein phosphatase 1 regulatory subunit 42 (ppp1r42) from Xenopus laevis (African clawed frog).